A 485-amino-acid polypeptide reads, in one-letter code: Adenosylhomocysteinase (485 aa).

3 residues coordinate substrate: Thr-64, Asp-139, and Glu-205. 206–208 (TTT) contributes to the NAD(+) binding site. The substrate site is built by Lys-235 and Asp-239. Residues Asn-240, 269–274 (GYGDVG), Glu-292, Asn-327, 348–350 (IGH), and Asn-397 each bind NAD(+).

It belongs to the adenosylhomocysteinase family. NAD(+) serves as cofactor.

It carries out the reaction S-adenosyl-L-homocysteine + H2O = L-homocysteine + adenosine. It participates in amino-acid biosynthesis; L-homocysteine biosynthesis; L-homocysteine from S-adenosyl-L-homocysteine: step 1/1. Its function is as follows. Adenosylhomocysteine is a competitive inhibitor of S-adenosyl-L-methionine-dependent methyl transferase reactions; therefore adenosylhomocysteinase may play a key role in the control of methylations via regulation of the intracellular concentration of adenosylhomocysteine. This chain is Adenosylhomocysteinase (SAHH), found in Nicotiana sylvestris (Wood tobacco).